Reading from the N-terminus, the 318-residue chain is MQIYLANPRGFCAGVDRAIAIVNEALARFEPPIYVRHEVVHNKFVVSDLANRGAVFVEELHEVPDGSIVIFSAHGVSKAVEDEAERRDLTVFDATCPLVTKVHIEVAKFAREKMDAVLIGHQGHPEVEGTMGRFSAQYGGEIHLVENEADVEKLEVSDPDRLAFVTQTTLSMDDTAVVIDALRKKFPNIQGPRKDDICYATQNRQDAVKDLAQRCEVVLVVGSPNSSNSNRLRELAERMNCKAYLIDNAGEMKKEWFAGVGAVGVTAGASAPEILIQEVLNQLQQWGGDLPDELKGIEENVTFSLPKELRIPVKEVGL.

Cysteine 12 is a [4Fe-4S] cluster binding site. (2E)-4-hydroxy-3-methylbut-2-enyl diphosphate contacts are provided by histidine 41 and histidine 74. Positions 41 and 74 each coordinate dimethylallyl diphosphate. Residues histidine 41 and histidine 74 each coordinate isopentenyl diphosphate. Position 96 (cysteine 96) interacts with [4Fe-4S] cluster. Histidine 124 is a (2E)-4-hydroxy-3-methylbut-2-enyl diphosphate binding site. Histidine 124 is a dimethylallyl diphosphate binding site. Histidine 124 lines the isopentenyl diphosphate pocket. Catalysis depends on glutamate 126, which acts as the Proton donor. Threonine 168 provides a ligand contact to (2E)-4-hydroxy-3-methylbut-2-enyl diphosphate. Residue cysteine 198 participates in [4Fe-4S] cluster binding. The (2E)-4-hydroxy-3-methylbut-2-enyl diphosphate site is built by serine 226, serine 227, asparagine 228, and serine 270. The dimethylallyl diphosphate site is built by serine 226, serine 227, asparagine 228, and serine 270. Isopentenyl diphosphate contacts are provided by serine 226, serine 227, asparagine 228, and serine 270.

The protein belongs to the IspH family. The cofactor is [4Fe-4S] cluster.

The enzyme catalyses isopentenyl diphosphate + 2 oxidized [2Fe-2S]-[ferredoxin] + H2O = (2E)-4-hydroxy-3-methylbut-2-enyl diphosphate + 2 reduced [2Fe-2S]-[ferredoxin] + 2 H(+). The catalysed reaction is dimethylallyl diphosphate + 2 oxidized [2Fe-2S]-[ferredoxin] + H2O = (2E)-4-hydroxy-3-methylbut-2-enyl diphosphate + 2 reduced [2Fe-2S]-[ferredoxin] + 2 H(+). It participates in isoprenoid biosynthesis; dimethylallyl diphosphate biosynthesis; dimethylallyl diphosphate from (2E)-4-hydroxy-3-methylbutenyl diphosphate: step 1/1. The protein operates within isoprenoid biosynthesis; isopentenyl diphosphate biosynthesis via DXP pathway; isopentenyl diphosphate from 1-deoxy-D-xylulose 5-phosphate: step 6/6. Its function is as follows. Catalyzes the conversion of 1-hydroxy-2-methyl-2-(E)-butenyl 4-diphosphate (HMBPP) into a mixture of isopentenyl diphosphate (IPP) and dimethylallyl diphosphate (DMAPP). Acts in the terminal step of the DOXP/MEP pathway for isoprenoid precursor biosynthesis. The protein is 4-hydroxy-3-methylbut-2-enyl diphosphate reductase of Psychrobacter sp. (strain PRwf-1).